A 429-amino-acid polypeptide reads, in one-letter code: Enolase (429 aa).

A (2R)-2-phosphoglycerate-binding site is contributed by Gln-163. Residue Glu-205 is the Proton donor of the active site. Mg(2+)-binding residues include Asp-242, Glu-287, and Asp-314. 4 residues coordinate (2R)-2-phosphoglycerate: Lys-339, Arg-368, Ser-369, and Lys-390. The active-site Proton acceptor is Lys-339.

The protein belongs to the enolase family. Requires Mg(2+) as cofactor.

The protein localises to the cytoplasm. It is found in the secreted. The protein resides in the cell surface. It carries out the reaction (2R)-2-phosphoglycerate = phosphoenolpyruvate + H2O. It participates in carbohydrate degradation; glycolysis; pyruvate from D-glyceraldehyde 3-phosphate: step 4/5. Functionally, catalyzes the reversible conversion of 2-phosphoglycerate (2-PG) into phosphoenolpyruvate (PEP). It is essential for the degradation of carbohydrates via glycolysis. The sequence is that of Enolase from Cupriavidus taiwanensis (strain DSM 17343 / BCRC 17206 / CCUG 44338 / CIP 107171 / LMG 19424 / R1) (Ralstonia taiwanensis (strain LMG 19424)).